We begin with the raw amino-acid sequence, 245 residues long: Superoxide dismutase [Mn], mitochondrial (245 aa).

The N-terminal 32 residues, Met1 to Ala32, are a transit peptide targeting the mitochondrion. Mn(2+) contacts are provided by His58, His106, Asp196, and His200.

Belongs to the iron/manganese superoxide dismutase family. In terms of assembly, homotetramer. It depends on Mn(2+) as a cofactor.

Its subcellular location is the mitochondrion matrix. The enzyme catalyses 2 superoxide + 2 H(+) = H2O2 + O2. Functionally, destroys superoxide anion radicals which are normally produced within the cells and which are toxic to biological systems. The sequence is that of Superoxide dismutase [Mn], mitochondrial (sod-2) from Neurospora crassa (strain ATCC 24698 / 74-OR23-1A / CBS 708.71 / DSM 1257 / FGSC 987).